The following is an 87-amino-acid chain: Spermatid-specific protein S1 (87 aa).

A disordered region spans residues 1-36; the sequence is TKSRYRNRRSRPRRRYGRRMRKTRCRRKGRRISRRP.

It is found in the nucleus. The protein localises to the chromosome. Functionally, involved in nuclear basic protein transition: histones are replaced by spermatid specific proteins which are themselves replaced by protamines in late spermatids. In Scyliorhinus canicula (Small-spotted catshark), this protein is Spermatid-specific protein S1.